A 410-amino-acid polypeptide reads, in one-letter code: Histone-lysine N-methyltransferase SUV39H2 (410 aa).

One can recognise a Chromo domain in the interval 47 to 105; the sequence is YEVEYLCDYKVVKDMEYYLVKWKGWPDSTNTWEPLQNLKCPLLLQQFSNDKHNYLSQVK. The Pre-SET domain occupies 189–247; it reads FGCSCTDCFFQKCCPAEAGVLLAYNKNQQIKIPPGTPIYECNSRCQCGPDCPNRIVQKG. Cys191, Cys193, Cys196, Cys201, Cys202, Cys229, Cys233, Cys235, and Cys239 together coordinate Zn(2+). The SET domain maps to 250-373; it reads YSLCIFRTSN…AGEELTFDYQ (124 aa). Residues 261 to 263 and 330 to 331 contribute to the S-adenosyl-L-methionine site; these read RGW and NH. Cys333 serves as a coordination point for Zn(2+). Tyr372 lines the S-adenosyl-L-methionine pocket. 3 positions are modified to phosphoserine: Ser381, Ser384, and Ser388. The Post-SET domain occupies 394 to 410; it reads VRTVCKCGAVTCRGYLN. Cys398 provides a ligand contact to Zn(2+). Lys399 serves as a coordination point for S-adenosyl-L-methionine. Zn(2+) contacts are provided by Cys400 and Cys405.

Belongs to the class V-like SAM-binding methyltransferase superfamily. Histone-lysine methyltransferase family. Suvar3-9 subfamily. Interacts with SMAD5. The large PER complex involved in the histone methylation is composed of at least PER2, CBX3, TRIM28, SUV39H1 and/or SUV39H2; CBX3 mediates the formation of the complex. Post-translationally, ubiquitinated by the DCX(DCAF13) E3 ubiquitin ligase complex, leading to its degradation.

Its subcellular location is the nucleus. The protein resides in the chromosome. It localises to the centromere. The enzyme catalyses L-lysyl(9)-[histone H3] + 3 S-adenosyl-L-methionine = N(6),N(6),N(6)-trimethyl-L-lysyl(9)-[histone H3] + 3 S-adenosyl-L-homocysteine + 3 H(+). Its function is as follows. Histone methyltransferase that specifically trimethylates 'Lys-9' of histone H3 using monomethylated H3 'Lys-9' as substrate. H3 'Lys-9' trimethylation represents a specific tag for epigenetic transcriptional repression by recruiting HP1 (CBX1, CBX3 and/or CBX5) proteins to methylated histones. Mainly functions in heterochromatin regions, thereby playing a central role in the establishment of constitutive heterochromatin at pericentric and telomere regions. H3 'Lys-9' trimethylation is also required to direct DNA methylation at pericentric repeats. SUV39H1 is targeted to histone H3 via its interaction with RB1 and is involved in many processes, such as cell cycle regulation, transcriptional repression and regulation of telomere length. May participate in regulation of higher-order chromatin organization during spermatogenesis. Recruited by the large PER complex to the E-box elements of the circadian target genes such as PER2 itself or PER1, contributes to the conversion of local chromatin to a heterochromatin-like repressive state through H3 'Lys-9' trimethylation. The protein is Histone-lysine N-methyltransferase SUV39H2 (SUV39H2) of Homo sapiens (Human).